The following is a 205-amino-acid chain: Small ribosomal subunit protein uS2 (205 aa).

It belongs to the universal ribosomal protein uS2 family.

The sequence is that of Small ribosomal subunit protein uS2 (rps2) from Aeropyrum pernix (strain ATCC 700893 / DSM 11879 / JCM 9820 / NBRC 100138 / K1).